A 157-amino-acid polypeptide reads, in one-letter code: uncharacterized protein (157 aa).

Lys-115 participates in a covalent cross-link: Isoglutamyl lysine isopeptide (Lys-Gln) (interchain with Q-Cter in protein Pup).

This is an uncharacterized protein from Mycolicibacterium smegmatis (strain ATCC 700084 / mc(2)155) (Mycobacterium smegmatis).